Here is a 402-residue protein sequence, read N- to C-terminus: Type II NADH:quinone oxidoreductase (402 aa).

FAD contacts are provided by residues 12 to 16 (GAGYA), 39 to 40 (NK), and V83. E172 is an active-site residue. Residues D302, 319–320 (AQ), and K379 each bind FAD.

Belongs to the NADH dehydrogenase family. It depends on FAD as a cofactor.

The protein localises to the cell membrane. The catalysed reaction is a quinone + NADH + H(+) = a quinol + NAD(+). Alternative, nonproton pumping NADH:quinone oxidoreductase that delivers electrons to the respiratory chain by oxidation of NADH and reduction of quinones, and contributes to the regeneration of NAD(+). The polypeptide is Type II NADH:quinone oxidoreductase (Staphylococcus aureus (strain bovine RF122 / ET3-1)).